Consider the following 255-residue polypeptide: 5-oxoprolinase subunit A (255 aa).

This sequence belongs to the LamB/PxpA family. As to quaternary structure, forms a complex composed of PxpA, PxpB and PxpC.

It catalyses the reaction 5-oxo-L-proline + ATP + 2 H2O = L-glutamate + ADP + phosphate + H(+). In terms of biological role, catalyzes the cleavage of 5-oxoproline to form L-glutamate coupled to the hydrolysis of ATP to ADP and inorganic phosphate. The polypeptide is 5-oxoprolinase subunit A (Campylobacter jejuni subsp. jejuni serotype O:2 (strain ATCC 700819 / NCTC 11168)).